The primary structure comprises 683 residues: UvrABC system protein B (683 aa).

Residues 1-29 form a disordered region; that stretch reads MTDTGPLQPDRPDLDRPLSVDAPFEPAGD. Residues 39-417 enclose the Helicase ATP-binding domain; the sequence is AGFESGAEKQ…PGDYERDHSE (379 aa). Residue 52–59 participates in ATP binding; the sequence is GVTGSGKT. A Beta-hairpin motif is present at residues 105-128; the sequence is YYDYYQPEAYVEQTDTYIDKDMSI. Residues 442–604 form the Helicase C-terminal domain; sequence QVEDLIERIQ…EPRTIEKPVS (163 aa). Positions 587–603 are enriched in basic and acidic residues; it reads EFNAEHGHEPRTIEKPV. A disordered region spans residues 587–620; that stretch reads EFNAEHGHEPRTIEKPVSETNLPGSSTDTDGVAD. Residues 604 to 615 are compositionally biased toward polar residues; it reads SETNLPGSSTDT. In terms of domain architecture, UVR spans 630 to 665; the sequence is EQLIERLETRMQEAADNLEFELAADIRDRIRELRET.

This sequence belongs to the UvrB family. As to quaternary structure, forms a heterotetramer with UvrA during the search for lesions. Interacts with UvrC in an incision complex.

The protein resides in the cytoplasm. In terms of biological role, the UvrABC repair system catalyzes the recognition and processing of DNA lesions. A damage recognition complex composed of 2 UvrA and 2 UvrB subunits scans DNA for abnormalities. Upon binding of the UvrA(2)B(2) complex to a putative damaged site, the DNA wraps around one UvrB monomer. DNA wrap is dependent on ATP binding by UvrB and probably causes local melting of the DNA helix, facilitating insertion of UvrB beta-hairpin between the DNA strands. Then UvrB probes one DNA strand for the presence of a lesion. If a lesion is found the UvrA subunits dissociate and the UvrB-DNA preincision complex is formed. This complex is subsequently bound by UvrC and the second UvrB is released. If no lesion is found, the DNA wraps around the other UvrB subunit that will check the other stand for damage. The chain is UvrABC system protein B from Natronomonas pharaonis (strain ATCC 35678 / DSM 2160 / CIP 103997 / JCM 8858 / NBRC 14720 / NCIMB 2260 / Gabara) (Halobacterium pharaonis).